The chain runs to 386 residues: Signal transduction histidine-protein kinase/phosphatase DegS (386 aa).

In terms of domain architecture, Histidine kinase spans 188 to 384; the sequence is KLSREIHDGP…TIIISIPITT (197 aa). At H194 the chain carries Phosphohistidine; by autocatalysis.

Post-translationally, autophosphorylated.

It is found in the cytoplasm. The catalysed reaction is ATP + protein L-histidine = ADP + protein N-phospho-L-histidine.. Its function is as follows. Member of the two-component regulatory system DegS/DegU, which plays an important role in the transition growth phase. Acts as both a protein kinase that undergoes autophosphorylation and subsequently transfers the phosphate to DegU, and a protein phosphatase that dephosphorylates phospho-DegU. The protein is Signal transduction histidine-protein kinase/phosphatase DegS (degS) of Brevibacillus brevis (Bacillus brevis).